The chain runs to 400 residues: Acetate kinase (400 aa).

Asparagine 10 is a binding site for Mg(2+). Lysine 17 provides a ligand contact to ATP. Arginine 91 serves as a coordination point for substrate. Residue aspartate 150 is the Proton donor/acceptor of the active site. ATP-binding positions include 210–214 (HLGSG), 285–287 (DCR), and 333–337 (GIGEN). Position 387 (glutamate 387) interacts with Mg(2+).

This sequence belongs to the acetokinase family. As to quaternary structure, homodimer. It depends on Mg(2+) as a cofactor. Mn(2+) serves as cofactor.

The protein resides in the cytoplasm. The catalysed reaction is acetate + ATP = acetyl phosphate + ADP. The protein operates within metabolic intermediate biosynthesis; acetyl-CoA biosynthesis; acetyl-CoA from acetate: step 1/2. Functionally, catalyzes the formation of acetyl phosphate from acetate and ATP. Can also catalyze the reverse reaction. This is Acetate kinase from Baumannia cicadellinicola subsp. Homalodisca coagulata.